The following is a 441-amino-acid chain: MQVSLNPEWLARNNDEHKIRRNDHRSPFQRDRARILHSAAFRRLQAKTQVHGTSLNDFHRTRLTHSLEAAQIGTGIVAQIKLKQPEFRELLPSDSLIDSLCLAHDIGHPPYGHGGEIALNYMMRDHGGFEGNAQTFRIVTSLEPYTEHHGMNLSRRTLLGLLKYPALLSATRAAIPPPAVAHQRQLKAKDWSPAKGIYDCDLASLDWVLEPLCESDRELLGQMRAEPSSPKEHRKTRFKSLDCSIMELADDIAYGVHDLEDAIVLGMVTRAQWQEAAAAQLAECGDPWFEEHIAELSEMLFSGKHYVCKDAIGGIVNALLTSISVKPVEAPFHNELLAFNAYIEPHMGNALEVLKHFVSQYVIQIPQVQRFEYKGQQLIMDLFEALSADPERLLPQATGEKWRKAQEQDEGMRVICDYIAAMTDAYAQRLHQQLFSAQSHY.

The HD domain occupies 62-255 (RLTHSLEAAQ…MELADDIAYG (194 aa)).

It belongs to the dGTPase family. Type 2 subfamily.

The chain is Deoxyguanosinetriphosphate triphosphohydrolase-like protein (dgt) from Vibrio cholerae serotype O1 (strain ATCC 39541 / Classical Ogawa 395 / O395).